A 770-amino-acid polypeptide reads, in one-letter code: Protein PAT1 homolog 1 (770 aa).

A disordered region spans residues 1–26; sequence MFRYESLEDCPLDEDEDAFQGLGEED. The segment at 1-84 is region A; interaction with DDX6/RCK; the sequence is MFRYESLEDC…EMDLLGDHEE (84 aa). The interval 1 to 397 is involved in nuclear foci localization; the sequence is MFRYESLEDC…HRSSHQDHLR (397 aa). Acidic residues predominate over residues 7–26; sequence LEDCPLDEDEDAFQGLGEED. The segment at 85-388 is region N; interaction with decapping machinery; the sequence is NLAERLSKMV…LNGAGDRGSH (304 aa). A Nuclear export signal motif is present at residues 86-95; the sequence is LAERLSKMVI. At Ser-177 the chain carries Phosphoserine. Thr-178 bears the Phosphothreonine mark. 2 positions are modified to phosphoserine: Ser-179 and Ser-184. Thr-194 is modified (phosphothreonine). Asymmetric dimethylarginine occurs at positions 217, 223, and 263. The interval 223–397 is involved in RNA-binding; that stretch reads RYPAPYGERM…HRSSHQDHLR (175 aa). Ser-278 carries the post-translational modification Phosphoserine. Asymmetric dimethylarginine is present on Arg-284. Positions 314–323 are enriched in low complexity; it reads GFRAFFSAPP. 2 disordered regions span residues 314 to 344 and 360 to 399; these read GFRA…QNLR and QHRR…LRKD. Pro residues predominate over residues 324 to 337; that stretch reads SATPPPQQHPPGPG. The segment covering 367 to 380 has biased composition (low complexity); it reads QRQQQNRSQHRNLN. Position 385 is an omega-N-methylarginine (Arg-385). Positions 385–399 are enriched in basic and acidic residues; that stretch reads RGSHRSSHQDHLRKD. The interval 389–448 is region H; the sequence is RSSHQDHLRKDPYANLMLQREKDWVSKIQMMQLQSTDPYLDDFYYQNYFEKLEKLSAAEE. An involved in nuclear speckle localization region spans residues 398 to 770; it reads KDPYANLMLQ…TKLQLVQGIR (373 aa). Residues 449 to 770 are region C; sequence IQGDGPKKER…TKLQLVQGIR (322 aa).

Belongs to the PAT1 family. In terms of assembly, interacts (via region A) with DDX6/RCK. Interacts (via region H and region C) with LSM1 and LSM4. Interacts (via region N) with DCP1A, DCP2, EDC3, EDC4 and XRN1. Interacts with the CCR4-NOT complex. Interacts with the Lsm-containing SMN-Sm protein complex. Interacts with EIF4ENIF1/4E-T. In terms of tissue distribution, ubiquitous.

The protein localises to the cytoplasm. Its subcellular location is the P-body. It is found in the nucleus. It localises to the PML body. The protein resides in the nucleus speckle. In terms of biological role, RNA-binding protein involved in deadenylation-dependent decapping of mRNAs, leading to the degradation of mRNAs. Acts as a scaffold protein that connects deadenylation and decapping machinery. Required for cytoplasmic mRNA processing body (P-body) assembly. (Microbial infection) In case of infection, required for translation and replication of hepatitis C virus (HCV). The sequence is that of Protein PAT1 homolog 1 (PATL1) from Homo sapiens (Human).